Consider the following 304-residue polypeptide: Recombination-associated protein RdgC (304 aa).

It belongs to the RdgC family.

It localises to the cytoplasm. The protein resides in the nucleoid. Functionally, may be involved in recombination. The polypeptide is Recombination-associated protein RdgC (Shewanella baltica (strain OS195)).